Consider the following 1238-residue polypeptide: Virulence sensor protein BvgS (1238 aa).

A signal peptide spans Met-1–Ala-30. Residues Ser-33 to Pro-307 are Cytoplasmic-facing. The chain crosses the membrane as a helical span at residues Val-308–Gly-331. At Ile-332 to Glu-541 the chain is on the periplasmic side. The chain crosses the membrane as a helical span at residues Ile-542–Leu-563. Residues Arg-564–Pro-1238 are Cytoplasmic-facing. The PAS domain occupies Gln-580 to Ser-651. In terms of domain architecture, PAC spans Ala-652–Asp-708. The 223-residue stretch at Thr-726–Met-948 folds into the Histidine kinase domain. A Phosphohistidine; by autocatalysis modification is found at His-729. The Response regulatory domain maps to Arg-974–Ala-1095. Asp-1023 carries the post-translational modification 4-aspartylphosphate. An HPt domain is found at Asp-1133 to Trp-1228. Phosphohistidine is present on His-1172.

In terms of processing, activation requires a sequential transfer of a phosphate group from a His in the primary transmitter domain, to an Asp in the receiver domain and to a His in the secondary transmitter domain.

The protein resides in the cell inner membrane. The enzyme catalyses ATP + protein L-histidine = ADP + protein N-phospho-L-histidine.. Member of the two-component regulatory system BvgS/BvgA. Phosphorylates BvgA via a four-step phosphorelay in response to environmental signals. This is Virulence sensor protein BvgS (bvgS) from Bordetella bronchiseptica (strain ATCC BAA-588 / NCTC 13252 / RB50) (Alcaligenes bronchisepticus).